The primary structure comprises 746 residues: Disintegrin and metalloproteinase domain-containing protein 18 (746 aa).

A signal peptide spans 1–16 (MFFLLALLTELGRLQA). Positions 17 to 183 (HVGSEGIFLH…QKKNLSKLLP (167 aa)) are excised as a propeptide. Residues N36, N122, N149, N156, N177, and N294 are each glycosylated (N-linked (GlcNAc...) asparagine). The Extracellular segment spans residues 177-687 (NLSKLLPQYL…EKGYNAHWNN (511 aa)). Residues 184–381 (QYLEIYIIVE…FEAKCLQKLS (198 aa)) form the Peptidase M12B domain. 4 disulfide bridges follow: C293/C376, C335/C360, C337/C342, and C450/C471. N-linked (GlcNAc...) asparagine glycosylation is found at N359, N465, N611, and N625. The Disintegrin domain occupies 390–479 (QPVCGNGILE…DCVPDTYALN (90 aa)). Residues 620 to 654 (TGYNCNTTTKCKGKGICNNFGNCQCFPGHKPPDCK) form the EGF-like domain. 3 disulfide bridges follow: C624–C636, C630–C642, and C644–C653. A helical membrane pass occupies residues 688 to 708 (WFILSFYIVLPFFIIFTIVIF). The Cytoplasmic segment spans residues 709–746 (KRNEIRKLCNRENTELIHPLYQKAMMWNINIAQNFRSK).

The prodomain and the metalloprotease-like domain are cleaved during the epididymal maturation of the spermatozoa. Expressed predominantly in adult and prepubertal testis.

It is found in the membrane. Sperm surface membrane protein that may be involved in spermatogenesis and fertilization. This is a non catalytic metalloprotease-like protein. The chain is Disintegrin and metalloproteinase domain-containing protein 18 (ADAM18) from Macaca fascicularis (Crab-eating macaque).